The chain runs to 584 residues: Ubiquitin-like-specific protease 1D (584 aa).

Disordered regions lie at residues 28-64 (DKED…PKLL) and 99-323 (DLEE…QAAE). Residues 99–120 (DLEEEKQRRVLEGSKMEVDRSS) are compositionally biased toward basic and acidic residues. A compositionally biased stretch (low complexity) spans 121-132 (KVVSSTSSGSDV). Composition is skewed to basic and acidic residues over residues 142-165 (DTSR…KEVS) and 176-196 (PKTD…LGCE). Residues 197–207 (RRKHKAGRKPV) are compositionally biased toward basic residues. Basic and acidic residues predominate over residues 221–253 (GKAEHSAKQFDSGLKESKGNKKSKEPYGKKRPM). Positions 261 to 274 (IDDDDDDDDDDDND) are enriched in acidic residues. The span at 275-286 (TSGHETPREWSW) shows a compositional bias: basic and acidic residues. Residues H438, D461, and C525 contribute to the active site.

The protein belongs to the peptidase C48 family.

It is found in the nucleus speckle. In terms of biological role, protease that catalyzes two essential functions in the SUMO pathway: processing of full-length SUMOs to their mature forms and deconjugation of SUMO from targeted proteins. Cleaves precursors of SUM1 and SUM2, but not of SUM3 or SUM5. Able to release SUM1 and SUM2 from conjugates, but unable to cleave SUM3. Protease activity mainly directed at deconjugating SUM1 and SUM2 from their target proteins. Regulates salt stress responses and flowering time. Redundant with ULP1C. The sequence is that of Ubiquitin-like-specific protease 1D (ULP1D) from Arabidopsis thaliana (Mouse-ear cress).